A 155-amino-acid polypeptide reads, in one-letter code: Small ribosomal subunit protein uS7 (155 aa).

Belongs to the universal ribosomal protein uS7 family. In terms of assembly, part of the 30S ribosomal subunit. Contacts proteins S9 and S11.

One of the primary rRNA binding proteins, it binds directly to 16S rRNA where it nucleates assembly of the head domain of the 30S subunit. Is located at the subunit interface close to the decoding center, probably blocks exit of the E-site tRNA. The protein is Small ribosomal subunit protein uS7 of Corynebacterium glutamicum (strain R).